Here is a 449-residue protein sequence, read N- to C-terminus: L10-interacting MYB domain-containing protein (449 aa).

The region spanning 162–225 is the Myb-like domain; the sequence is SNPQTKGYWS…YTRPQLKNHW (64 aa). The segment at 297-324 is disordered; the sequence is TYTPPSRSRKKLLHNRSESPQWRDTTPL. The span at 314–324 shows a compositional bias: polar residues; the sequence is ESPQWRDTTPL.

As to quaternary structure, interacts with RPL10A. As to expression, expressed in seedlings, leaves, roots, stems and flowers.

Its subcellular location is the nucleus. Transcriptional repressor that associates with ribosomal protein promoters. The chain is L10-interacting MYB domain-containing protein from Arabidopsis thaliana (Mouse-ear cress).